Here is a 442-residue protein sequence, read N- to C-terminus: Trigger factor (442 aa).

The PPIase FKBP-type domain maps to 176–259; sequence GDFISLSLYV…VNAVIEISSP (84 aa).

Belongs to the FKBP-type PPIase family. Tig subfamily.

It localises to the cytoplasm. The catalysed reaction is [protein]-peptidylproline (omega=180) = [protein]-peptidylproline (omega=0). Its function is as follows. Involved in protein export. Acts as a chaperone by maintaining the newly synthesized protein in an open conformation. Functions as a peptidyl-prolyl cis-trans isomerase. The polypeptide is Trigger factor (Chlamydia trachomatis serovar L2 (strain ATCC VR-902B / DSM 19102 / 434/Bu)).